Reading from the N-terminus, the 369-residue chain is 4-hydroxyproline betaine 2-epimerase (369 aa).

Positions 56 and 162 each coordinate substrate. The active-site Proton donor/acceptor is the K164. Mg(2+)-binding residues include D194, E219, and D242. K266 acts as the Proton donor/acceptor in catalysis. A295 contacts substrate.

It belongs to the mandelate racemase/muconate lactonizing enzyme family. It depends on Mg(2+) as a cofactor.

It catalyses the reaction trans-4-hydroxy-L-proline betaine = cis-4-hydroxy-D-proline betaine. The catalysed reaction is L-proline betaine = D-proline betaine. Catalyzes the 2-epimerization of trans-4-hydroxy-L-proline betaine (tHyp-B) to cis-4-hydroxy-D-proline betaine (cHyp-B). Is involved in a catabolic pathway that degrades tHyp-B to alpha-ketoglutarate. This pathway would permit the utilization of tHyp-B as a carbon and nitrogen source in the absence of osmotic stress, since tHyp-B functions as an osmolyte and is not catabolized when it is needed as osmoprotectant. Can also catalyze the racemization of L-proline betaine. The polypeptide is 4-hydroxyproline betaine 2-epimerase (hpbD) (Paracoccus denitrificans (strain Pd 1222)).